We begin with the raw amino-acid sequence, 493 residues long: Acetyl-coenzyme A carboxylase carboxyl transferase subunit beta (493 aa).

Positions 231–493 constitute a CoA carboxyltransferase N-terminal domain; that stretch reads LWVQCENCYG…FKLHAFFPLN (263 aa). Zn(2+) contacts are provided by Cys235, Cys238, Cys254, and Cys257. The C4-type zinc-finger motif lies at 235 to 257; it reads CENCYGLNYKKFLKSKINLCEQC.

It belongs to the AccD/PCCB family. As to quaternary structure, acetyl-CoA carboxylase is a heterohexamer composed of biotin carboxyl carrier protein, biotin carboxylase and 2 subunits each of ACCase subunit alpha and ACCase plastid-coded subunit beta (accD). Zn(2+) is required as a cofactor.

It localises to the plastid stroma. The enzyme catalyses N(6)-carboxybiotinyl-L-lysyl-[protein] + acetyl-CoA = N(6)-biotinyl-L-lysyl-[protein] + malonyl-CoA. Its pathway is lipid metabolism; malonyl-CoA biosynthesis; malonyl-CoA from acetyl-CoA: step 1/1. Component of the acetyl coenzyme A carboxylase (ACC) complex. Biotin carboxylase (BC) catalyzes the carboxylation of biotin on its carrier protein (BCCP) and then the CO(2) group is transferred by the transcarboxylase to acetyl-CoA to form malonyl-CoA. The chain is Acetyl-coenzyme A carboxylase carboxyl transferase subunit beta from Epifagus virginiana (Beechdrops).